We begin with the raw amino-acid sequence, 356 residues long: tRNA N6-adenosine threonylcarbamoyltransferase (356 aa).

Residues His-116 and His-120 each contribute to the Fe cation site. Residues 139 to 143, Asp-174, Gly-187, Asp-191, and Asn-281 contribute to the substrate site; that span reads IVSGG. Asp-309 provides a ligand contact to Fe cation.

Belongs to the KAE1 / TsaD family. Fe(2+) serves as cofactor.

It is found in the cytoplasm. It carries out the reaction L-threonylcarbamoyladenylate + adenosine(37) in tRNA = N(6)-L-threonylcarbamoyladenosine(37) in tRNA + AMP + H(+). Its function is as follows. Required for the formation of a threonylcarbamoyl group on adenosine at position 37 (t(6)A37) in tRNAs that read codons beginning with adenine. Is involved in the transfer of the threonylcarbamoyl moiety of threonylcarbamoyl-AMP (TC-AMP) to the N6 group of A37, together with TsaE and TsaB. TsaD likely plays a direct catalytic role in this reaction. The polypeptide is tRNA N6-adenosine threonylcarbamoyltransferase (Frankia casuarinae (strain DSM 45818 / CECT 9043 / HFP020203 / CcI3)).